Consider the following 235-residue polypeptide: MKKTVIASTLAVSLGIAGYGLSGHEAHASETTNVDKAHLVDLAQHNPEELNAKPVQAGAYDIHFVDNGYQYNFTSNGSEWSWSYAVAGSDADYTESSSNQEVSANTQSSNTNVQAVSAPTSSESRSYSTSTTSYSAPSHNYSSHSSSVRLSNGNTAGSVGSYAAAQMAARTGVSASTWEHIIARESNGQLHARNASGAAGLFQTMPGWGSTGSVNDQINAAYKAYKAQGLSAWGM.

Positions 1-28 (MKKTVIASTLAVSLGIAGYGLSGHEAHA) are cleaved as a signal peptide. Positions 95-115 (ESSSNQEVSANTQSSNTNVQA) are enriched in polar residues. Residues 95 to 150 (ESSSNQEVSANTQSSNTNVQAVSAPTSSESRSYSTSTTSYSAPSHNYSSHSSSVRL) form a disordered region. A compositionally biased stretch (low complexity) spans 117–147 (SAPTSSESRSYSTSTTSYSAPSHNYSSHSSS).

Belongs to the transglycosylase family. IsaA subfamily.

The protein resides in the secreted. Its function is as follows. Is able to cleave peptidoglycan. This is Probable transglycosylase IsaA (isaA) from Staphylococcus epidermidis (strain ATCC 35984 / DSM 28319 / BCRC 17069 / CCUG 31568 / BM 3577 / RP62A).